We begin with the raw amino-acid sequence, 1002 residues long: Chitin synthase II (1002 aa).

2 disordered regions span residues 1–165 and 178–209; these read MDRP…GRTS and LDGS…SGSQ. The segment covering 63–78 has biased composition (low complexity); sequence SYQPSVVSSHSRSASV. N123 carries an N-linked (GlcNAc...) asparagine glycan. N-linked (GlcNAc...) asparagine glycosylation occurs at N336. 8 helical membrane passes run 627–647, 669–689, 704–724, 740–760, 780–800, 808–828, 906–926, and 940–960; these read WLNG…QILA, LLFT…VAGG, SVIF…QFIL, SMII…YIVV, LIVS…LYLE, SLQY…YAFC, YMVV…SEIY, and ILWA…TFAI.

Belongs to the chitin synthase family. Class II subfamily. Expressed in hyphal bodies.

It is found in the cell membrane. The enzyme catalyses [(1-&gt;4)-N-acetyl-beta-D-glucosaminyl](n) + UDP-N-acetyl-alpha-D-glucosamine = [(1-&gt;4)-N-acetyl-beta-D-glucosaminyl](n+1) + UDP + H(+). Functionally, polymerizes chitin, a structural polymer of the cell wall and septum, by transferring the sugar moiety of UDP-GlcNAc to the non-reducing end of the growing chitin polymer. Contributes to the production of conidia and the ability of fungal conidia to germinate. Involved in fungal stress tolerances. This is Chitin synthase II from Metarhizium acridum (strain CQMa 102).